A 324-amino-acid polypeptide reads, in one-letter code: MLEQVILFTIIMGFLISVLLSPIFIPFLRRLKFGQSIREEGPKSHQKKSGTPTMGGVMIILSIIATTIVMTMKFSEVSMNMILLLFVTVGYGLLGFLDDYIKVVMKRNLGLTSKQKLIGQIVIALVFYAVYHFQGMPTDIRIPGTELSFDFGWIYPVLVIFMLVGGSNAVNLTDGLDGLLSGTAAIAFGAFAILAWNQSQYDVAIFAVAVVGAVLGFLVFNAHPAKVFMGDTGSLALGGAIVTIAILTKLEILLVIIGGVFVIETLSVILQVISFKTTGKRIFKMSPLHHHYELVGWSEWRVVVTFWTAGLLLAVLGIYIEVWL.

10 consecutive transmembrane segments (helical) span residues 5–25 (VILFTIIMGFLISVLLSPIFI), 52–72 (PTMGGVMIILSIIATTIVMTM), 77–97 (VSMNMILLLFVTVGYGLLGFL), 117–137 (LIGQIVIALVFYAVYHFQGMP), 147–167 (LSFDFGWIYPVLVIFMLVGGS), 176–196 (LDGLLSGTAAIAFGAFAILAW), 203–223 (VAIFAVAVVGAVLGFLVFNAH), 227–247 (VFMGDTGSLALGGAIVTIAIL), 250–270 (LEILLVIIGGVFVIETLSVIL), and 302–322 (VVVTFWTAGLLLAVLGIYIEV).

This sequence belongs to the glycosyltransferase 4 family. MraY subfamily. The cofactor is Mg(2+).

The protein localises to the cell membrane. It carries out the reaction UDP-N-acetyl-alpha-D-muramoyl-L-alanyl-gamma-D-glutamyl-meso-2,6-diaminopimeloyl-D-alanyl-D-alanine + di-trans,octa-cis-undecaprenyl phosphate = di-trans,octa-cis-undecaprenyl diphospho-N-acetyl-alpha-D-muramoyl-L-alanyl-D-glutamyl-meso-2,6-diaminopimeloyl-D-alanyl-D-alanine + UMP. The protein operates within cell wall biogenesis; peptidoglycan biosynthesis. Its function is as follows. Catalyzes the initial step of the lipid cycle reactions in the biosynthesis of the cell wall peptidoglycan: transfers peptidoglycan precursor phospho-MurNAc-pentapeptide from UDP-MurNAc-pentapeptide onto the lipid carrier undecaprenyl phosphate, yielding undecaprenyl-pyrophosphoryl-MurNAc-pentapeptide, known as lipid I. The chain is Phospho-N-acetylmuramoyl-pentapeptide-transferase from Bacillus licheniformis (strain ATCC 14580 / DSM 13 / JCM 2505 / CCUG 7422 / NBRC 12200 / NCIMB 9375 / NCTC 10341 / NRRL NRS-1264 / Gibson 46).